Here is a 113-residue protein sequence, read N- to C-terminus: Nucleoid-associated protein Cthe_2143 (113 aa).

The protein belongs to the YbaB/EbfC family. As to quaternary structure, homodimer.

The protein resides in the cytoplasm. Its subcellular location is the nucleoid. Binds to DNA and alters its conformation. May be involved in regulation of gene expression, nucleoid organization and DNA protection. The chain is Nucleoid-associated protein Cthe_2143 from Acetivibrio thermocellus (strain ATCC 27405 / DSM 1237 / JCM 9322 / NBRC 103400 / NCIMB 10682 / NRRL B-4536 / VPI 7372) (Clostridium thermocellum).